Reading from the N-terminus, the 582-residue chain is Proline--tRNA ligase (582 aa).

The protein belongs to the class-II aminoacyl-tRNA synthetase family. ProS type 1 subfamily. Homodimer.

It localises to the cytoplasm. It carries out the reaction tRNA(Pro) + L-proline + ATP = L-prolyl-tRNA(Pro) + AMP + diphosphate. In terms of biological role, catalyzes the attachment of proline to tRNA(Pro) in a two-step reaction: proline is first activated by ATP to form Pro-AMP and then transferred to the acceptor end of tRNA(Pro). As ProRS can inadvertently accommodate and process non-cognate amino acids such as alanine and cysteine, to avoid such errors it has two additional distinct editing activities against alanine. One activity is designated as 'pretransfer' editing and involves the tRNA(Pro)-independent hydrolysis of activated Ala-AMP. The other activity is designated 'posttransfer' editing and involves deacylation of mischarged Ala-tRNA(Pro). The misacylated Cys-tRNA(Pro) is not edited by ProRS. In Mycobacterium bovis (strain ATCC BAA-935 / AF2122/97), this protein is Proline--tRNA ligase.